Consider the following 302-residue polypeptide: Protein translocase subunit SecF (302 aa).

6 consecutive transmembrane segments (helical) span residues 12 to 32, 138 to 158, 166 to 186, 190 to 210, 249 to 269, and 272 to 292; these read FFIY…FVKG, YAWY…TIRF, AILA…LFGI, LTAI…TIVV, FLVV…FAFG, and VGVI…VIGM.

The protein belongs to the SecD/SecF family. SecF subfamily. As to quaternary structure, forms a complex with SecD. Part of the essential Sec protein translocation apparatus which comprises SecA, SecYEG and auxiliary proteins SecDF. Other proteins may also be involved.

Its subcellular location is the cell inner membrane. Its function is as follows. Part of the Sec protein translocase complex. Interacts with the SecYEG preprotein conducting channel. SecDF uses the proton motive force (PMF) to complete protein translocation after the ATP-dependent function of SecA. The protein is Protein translocase subunit SecF of Petrotoga mobilis (strain DSM 10674 / SJ95).